A 989-amino-acid chain; its full sequence is Bifunctional glutamine synthetase adenylyltransferase/adenylyl-removing enzyme (989 aa).

Residues 1-473 (MRGPLEPDSA…HYANLFEDVA (473 aa)) are adenylyl removase. Residues 479 to 989 (DADLMFPPDE…FERILETAAE (511 aa)) form an adenylyl transferase region.

It belongs to the GlnE family. The cofactor is Mg(2+).

The enzyme catalyses [glutamine synthetase]-O(4)-(5'-adenylyl)-L-tyrosine + phosphate = [glutamine synthetase]-L-tyrosine + ADP. The catalysed reaction is [glutamine synthetase]-L-tyrosine + ATP = [glutamine synthetase]-O(4)-(5'-adenylyl)-L-tyrosine + diphosphate. Involved in the regulation of glutamine synthetase GlnA, a key enzyme in the process to assimilate ammonia. When cellular nitrogen levels are high, the C-terminal adenylyl transferase (AT) inactivates GlnA by covalent transfer of an adenylyl group from ATP to specific tyrosine residue of GlnA, thus reducing its activity. Conversely, when nitrogen levels are low, the N-terminal adenylyl removase (AR) activates GlnA by removing the adenylyl group by phosphorolysis, increasing its activity. The regulatory region of GlnE binds the signal transduction protein PII (GlnB) which indicates the nitrogen status of the cell. The chain is Bifunctional glutamine synthetase adenylyltransferase/adenylyl-removing enzyme from Xanthobacter autotrophicus (strain ATCC BAA-1158 / Py2).